The primary structure comprises 463 residues: MTKIAWQNTKHIVVLGLGKTGVSVLRYLQHKRQQDQKLAEVKIQVFDSRENPPGLEEAKQILGDAELINRHWELEDTLAADLIIASPGIDLREDPVVLARDADIPIVGDVELFAQESKLPIVAVTGSNGKSTVTRMVEFVAKQCGKNVAAAGNIGVPVLDLLLQEQHPDAVILELSSFQLESVSSLKLKAAALMNISADHMDRYCTLDEYVKAKQRIFTHAKTWILNRQQQDTWPHPVTGKLMTFGNDSHPKHFGLLSGNIDRVSGPVAVTFDGSVVLRADQLQLQGIHNLVNVQAALALCQAIDIDIEAAVRAVKEFKGLPHRCELVSDNEGVLWVNDSKATNIGATAAAVEGLRPMINGRLLLIAGGVGKGADFRELQSTLERVDILLTIGEDGPRIGQLFNGSRQVKSLQQAVELAASLVQTGDMVLLSPACASFDQFQNFEHRGDSFRHAVEALYVNSA.

Residue 126–132 (GSNGKST) coordinates ATP.

Belongs to the MurCDEF family.

It localises to the cytoplasm. The catalysed reaction is UDP-N-acetyl-alpha-D-muramoyl-L-alanine + D-glutamate + ATP = UDP-N-acetyl-alpha-D-muramoyl-L-alanyl-D-glutamate + ADP + phosphate + H(+). It participates in cell wall biogenesis; peptidoglycan biosynthesis. Cell wall formation. Catalyzes the addition of glutamate to the nucleotide precursor UDP-N-acetylmuramoyl-L-alanine (UMA). This chain is UDP-N-acetylmuramoylalanine--D-glutamate ligase, found in Idiomarina loihiensis (strain ATCC BAA-735 / DSM 15497 / L2-TR).